Here is a 378-residue protein sequence, read N- to C-terminus: MYSPIRKSHPLLKMMSGSFSDLPSPSNFSIWWNFGSLLGLCLVIQILSGLFLSMHYTSHVDLAFSSVAHIGRDVNYGWLLRSIHANGASFFFMCLYCHIGRGMYYMSYFFMETWNVGVVIFFLTMGTAFVGYVLPWGQMSFWGATVITNLASAIPYIGEILVQWVWGGFSVDNATLTRFFSFHFLFPFMIAGLSMVHLLFLHQTGSNNPLGLNSDCDKIPFHWFYSTKDIAGFLVFFFVFFIVVLLYPNGFTDPENFIPANPLVTPVHIQPEWYFLFAYAILRSIPNKLGGVVSLVASIAILFCLPLTISLMKFRSLVFYPLNQILFWSFCSIFLLLTWIGMRPVEDPYIFIGQILTVLYFSYFLLNPLILKFWDNLY.

The next 4 membrane-spanning stretches (helical) occupy residues 34–54 (FGSL…FLSM), 78–100 (WLLR…CHIG), 113–133 (TWNV…VGYV), and 179–199 (FFSF…VHLL). Positions 84 and 98 each coordinate heme b. Heme b is bound by residues His-183 and His-197. Residue His-202 participates in a ubiquinone binding. The next 4 helical transmembrane spans lie at 225 to 245 (YSTK…IVVL), 289 to 306 (LGGV…FCLP), 313 to 342 (KFRS…WIGM), and 350 to 369 (IFIG…LNPL).

This sequence belongs to the cytochrome b family. In terms of assembly, the main subunits of complex b-c1 are: cytochrome b, cytochrome c1 and the Rieske protein. Heme b serves as cofactor.

The protein resides in the mitochondrion inner membrane. Component of the ubiquinol-cytochrome c reductase complex (complex III or cytochrome b-c1 complex) that is part of the mitochondrial respiratory chain. The b-c1 complex mediates electron transfer from ubiquinol to cytochrome c. Contributes to the generation of a proton gradient across the mitochondrial membrane that is then used for ATP synthesis. In Loxocorone allax (Goblet worm), this protein is Cytochrome b (mt:Cyt-b).